The primary structure comprises 445 residues: MRPNRFSLRRSPTAVAAVALAAVLAAGAPAAQAAGAAAPTAAAAAAPDIPLANVKAHLTQLSTIAANNGGNRAHGRPGYKASVDYVKAKLDAAGYTTTLQQFTSGGATGYNLIADWPGGDPNKVLMAGAHLDSVSSGAGINDNGSGSAAVLETALAVSRAGYQPDKHLRFAWWGAEELGLIGSKYYVNNLPSADRSKLAGYLNFDMIGSPNPGYFVYDDDPVIEKTFKDYFAGLNVPTEIETEGDGRSDHAPFKNVGVPVGGLFTGAGYTKSAAQAQKWGGTAGQAFDRCYHSSCDSLSNINDTALDRNSDAAAHAIWTLSSGTGEPPTGEGVFSNTTDVAIPDAGAAVTSSVAVTGRTGNAPAALQVGVDIKHTYRGDLVVDLLAPDGTAYRLKNSSSGDSADNVIATYTVNASSEVANGSWKLRVQDIARQDTGYIDSWKLTF.

An N-terminal signal peptide occupies residues 1–45 (MRPNRFSLRRSPTAVAAVALAAVLAAGAPAAQAAGAAAPTAAAAA). Ca(2+)-binding residues include D48 and I49. The Zn(2+) site is built by H130 and D142. E176 functions as the Proton acceptor in the catalytic mechanism. Zn(2+) is bound by residues E177, D205, and H292. The cysteines at positions 290 and 295 are disulfide-linked. Ca(2+) is bound by residues D307 and D311. Residues 325-445 (GEPPTGEGVF…GYIDSWKLTF (121 aa)) form the P/Homo B domain. A propeptide spans 330-445 (GEGVFSNTTD…GYIDSWKLTF (116 aa)) (removed in mature form).

It belongs to the peptidase M28 family. M28A subfamily. As to quaternary structure, monomer. Ca(2+) serves as cofactor. Requires Zn(2+) as cofactor. Mn(2+) is required as a cofactor. The cofactor is Co(2+).

Its subcellular location is the secreted. It carries out the reaction Release of an N-terminal amino acid with a preference for large hydrophobic amino-terminus residues.. With respect to regulation, calcium activates the enzyme, inhibited by 1,10-phenanthroline, EDTA and EGTA. End-product inhibited by L-amino acids. Non-competitively inhibited by NaF and NaH(2)PO(4). In terms of biological role, an exopeptidase specific for larger hydrophobic amino acids (especially leucine), no cleavage occurs if the next residue is proline. The sequence is that of Aminopeptidase S from Streptomyces griseus subsp. griseus (strain JCM 4626 / CBS 651.72 / NBRC 13350 / KCC S-0626 / ISP 5235).